A 496-amino-acid chain; its full sequence is Signal recognition particle subunit SRP54 1 (496 aa).

A G-domain region spans residues 1–296 (MVLAQLGGSI…DVKPFVSRLL (296 aa)). Residues 108–115 (GLQGSGKT), 191–195 (DTSGR), and 249–252 (TKMD) each bind GTP. The tract at residues 297–496 (GMGDLSGLVN…MGMFGGGGGE (200 aa)) is M-domain.

This sequence belongs to the GTP-binding SRP family. SRP54 subfamily. In terms of assembly, component of a signal recognition particle (SRP) complex that consists of a 7SL RNA molecule of 300 nucleotides and six protein subunits: SRP72, SRP68, SRP54, SRP19, SRP14 and SRP9.

It is found in the cytoplasm. It localises to the endoplasmic reticulum. The catalysed reaction is GTP + H2O = GDP + phosphate + H(+). Functionally, component of the signal recognition particle (SRP) complex, a ribonucleoprotein complex that mediates the cotranslational targeting of secretory and membrane proteins to the endoplasmic reticulum (ER). As part of the SRP complex, associates with the SRP receptor (SR) component SRPRA to target secretory proteins to the endoplasmic reticulum membrane. Binds to the signal sequence of presecretory proteins when they emerge from the ribosomes. Displays basal GTPase activity, and stimulates reciprocal GTPase activation of the SR subunit SRPRA. Forms a guanosine 5'-triphosphate (GTP)-dependent complex with the SR subunit SRPRA. SR compaction and GTPase mediated rearrangement of SR drive SRP-mediated cotranslational protein translocation into the ER. Requires the presence of SRP9/SRP14 and/or SRP19 to stably interact with RNA. This is Signal recognition particle subunit SRP54 1 from Solanum lycopersicum (Tomato).